An 883-amino-acid chain; its full sequence is Valine--tRNA ligase (883 aa).

Residues 50–60 carry the 'HIGH' region motif; it reads PNVTGKLHMGH. Residues 527–531 carry the 'KMSKS' region motif; sequence KMSKS. Lys530 is a binding site for ATP. A coiled-coil region spans residues 811-883; that stretch reads LNELIDLDEE…KQRLEQLQRA (73 aa). The segment at 859 to 883 is disordered; that stretch reads QRTKRSDFEDQLTSTKQRLEQLQRA.

It belongs to the class-I aminoacyl-tRNA synthetase family. ValS type 1 subfamily. In terms of assembly, monomer.

It is found in the cytoplasm. It carries out the reaction tRNA(Val) + L-valine + ATP = L-valyl-tRNA(Val) + AMP + diphosphate. Its function is as follows. Catalyzes the attachment of valine to tRNA(Val). As ValRS can inadvertently accommodate and process structurally similar amino acids such as threonine, to avoid such errors, it has a 'posttransfer' editing activity that hydrolyzes mischarged Thr-tRNA(Val) in a tRNA-dependent manner. The polypeptide is Valine--tRNA ligase (Lacticaseibacillus casei (Lactobacillus casei)).